The primary structure comprises 328 residues: CCAAT/enhancer-binding protein beta (328 aa).

R3 carries the asymmetric dimethylarginine; by CARM1 modification. K39 carries the N6-methylated lysine modification. A disordered region spans residues 165 to 274; the sequence is DSCKGPRKEE…NIAVRKSRDK (110 aa). A compositionally biased stretch (low complexity) spans 200-231; it reads SVPSGSSGNLSTSSSSSPPGTPNPSESSKSAA. T220 bears the Phosphothreonine; by RPS6KA1, CDK2 and MAPK mark. Over residues 248 to 264 the composition is skewed to basic and acidic residues; it reads KCVDKHSDEYKLRRERN. The bZIP domain maps to 254 to 317; that stretch reads SDEYKLRRER…STLRNLFKQL (64 aa). The interval 258–278 is basic motif; it reads KLRRERNNIAVRKSRDKAKMR. A leucine-zipper region spans residues 280 to 287; it reads LETQHKVL.

It belongs to the bZIP family. C/EBP subfamily. As to quaternary structure, binds DNA as a dimer. Interacts (not methylated) with MED23, MED26, SMARCA2, SMARCB1 and SMARCC1. Methylated. Methylation at Arg-3 by CARM1 and at Lys-39 by EHMT2, inhibit transactivation activity. Methylation is probably inhibited by phosphorylation at Thr-220. As to expression, specifically expressed in myelomoncytic cells.

The protein resides in the nucleus. Important transcriptional activator regulating the expression of genes involved in immune and inflammatory responses. Binds to regulatory regions of several acute-phase and cytokines genes and probably plays a role in the regulation of acute-phase reaction, inflammation and hemopoiesis. The consensus recognition site is 5'-T[TG]NNGNAA[TG]-3'. Functions in brown adipose tissue (BAT) differentiation. Regulates the transcriptional induction of peroxisome proliferator-activated receptor gamma (PPARG). Binds to the MGF and MIM-1 promoters and activates the transcription of these genes. Its function is as follows. Important transcription factor regulating the expression of genes involved in immune and inflammatory responses. Also plays a significant role in adipogenesis, as well as in the gluconeogenic pathway, liver regeneration, and hematopoiesis. The consensus recognition site is 5'-T[TG]NNGNAA[TG]-3'. Its functional capacity is governed by protein interactions and post-translational protein modifications. In Gallus gallus (Chicken), this protein is CCAAT/enhancer-binding protein beta (CEBPB).